A 266-amino-acid chain; its full sequence is Phosphatidylglycerol--prolipoprotein diacylglyceryl transferase (266 aa).

7 consecutive transmembrane segments (helical) span residues 21-41 (LAIRWYGLMYLVGFLFAMWLA), 60-80 (LLFAGFLGVVLGGRIGYVLFY), 95-115 (VWTGGMSFHGGLLGVMTAMLW), 124-144 (FFSVADFIAPLVPFGLGMGRM), 176-196 (SQLYEAFLEGFVLLIILNIFI), 203-223 (GAVSGLFLIGYGSFRFIIEYF), and 236-256 (WISMGQILSSPMIIFGALLML). Arg-143 is a binding site for a 1,2-diacyl-sn-glycero-3-phospho-(1'-sn-glycerol).

The protein belongs to the Lgt family.

It is found in the cell inner membrane. It carries out the reaction L-cysteinyl-[prolipoprotein] + a 1,2-diacyl-sn-glycero-3-phospho-(1'-sn-glycerol) = an S-1,2-diacyl-sn-glyceryl-L-cysteinyl-[prolipoprotein] + sn-glycerol 1-phosphate + H(+). Its pathway is protein modification; lipoprotein biosynthesis (diacylglyceryl transfer). Functionally, catalyzes the transfer of the diacylglyceryl group from phosphatidylglycerol to the sulfhydryl group of the N-terminal cysteine of a prolipoprotein, the first step in the formation of mature lipoproteins. The chain is Phosphatidylglycerol--prolipoprotein diacylglyceryl transferase from Photobacterium profundum (strain SS9).